A 111-amino-acid polypeptide reads, in one-letter code: Regulator of ribonuclease activity B (111 aa).

Belongs to the RraB family. Interacts with the C-terminal region of Rne.

The protein resides in the cytoplasm. Its function is as follows. Globally modulates RNA abundance by binding to RNase E (Rne) and regulating its endonucleolytic activity. Can modulate Rne action in a substrate-dependent manner by altering the composition of the degradosome. The protein is Regulator of ribonuclease activity B of Pseudoalteromonas translucida (strain TAC 125).